The following is a 140-amino-acid chain: NTF2-related export protein 1 (140 aa).

Residue Ala2 is modified to N-acetylalanine. The NTF2 domain occupies 16–135; it reads AAEEFVNVYY…WKIASDCFRF (120 aa).

In terms of assembly, heterodimer with NXF1. Forms a complex with RANGAP1, RANBP2/NUP358 and NXF1. Interacts (via NTF2 domain) with NXF1. Stabilizes the NTF2 domain of NXF1 by heterodimerization. The formation of NXF1-NXT1 heterodimers is required for the NXF1-mediated nuclear mRNA export. Preferentially binds Ran-GTP. Associates with NXF2, NXF3 and NXF5. Does not bind nucleoporins (NPC) directly, its association to NPC is mediated by NXF1.

It is found in the nucleus. It localises to the nucleus speckle. The protein resides in the cytoplasm. Its function is as follows. Stimulator of protein export for NES-containing proteins. Also plays a role in the nuclear export of U1 snRNA, tRNA, and mRNA. The NXF1-NXT1 heterodimer is involved in the export of HSP70 mRNA in conjunction with ALYREF/THOC4 and THOC5. The chain is NTF2-related export protein 1 (NXT1) from Bos taurus (Bovine).